The primary structure comprises 128 residues: Protein ripply2 (128 aa).

The tract at residues 1–63 (MENAGGAEGT…HAAEAMPDGP (63 aa)) is disordered. Positions 9–22 (GTESGAAACAATDG) are enriched in low complexity. Residues 37-40 (WRPW) carry the WRPW motif motif. The segment at 77-112 (HPVRLFWPKSKCYDYLYQEAEALLKNFPIQATISFY) is ripply homology domain.

The protein belongs to the ripply family.

It localises to the nucleus. Functionally, plays a role in somitogenesis. Required for somite segregation and establishment of rostrocaudal polarity in somites. The chain is Protein ripply2 (RIPPLY2) from Homo sapiens (Human).